A 261-amino-acid polypeptide reads, in one-letter code: tRNA pseudouridine synthase A (261 aa).

Asp52 (nucleophile) is an active-site residue. Residue Tyr110 coordinates substrate.

It belongs to the tRNA pseudouridine synthase TruA family. In terms of assembly, homodimer.

It catalyses the reaction uridine(38/39/40) in tRNA = pseudouridine(38/39/40) in tRNA. In terms of biological role, formation of pseudouridine at positions 38, 39 and 40 in the anticodon stem and loop of transfer RNAs. The chain is tRNA pseudouridine synthase A from Blochmanniella pennsylvanica (strain BPEN).